The following is a 126-amino-acid chain: Small ribosomal subunit protein eS8 (126 aa).

Polar residues predominate over residues 1–10; that stretch reads MAIWQGSSLR. The disordered stretch occupies residues 1–35; sequence MAIWQGSSLRKPSGARSRRNKNKRNAEFGRNPAET.

It belongs to the eukaryotic ribosomal protein eS8 family. As to quaternary structure, part of the 30S ribosomal subunit.

This chain is Small ribosomal subunit protein eS8, found in Methanosphaera stadtmanae (strain ATCC 43021 / DSM 3091 / JCM 11832 / MCB-3).